Reading from the N-terminus, the 20-residue chain is Protein PR-L3 (20 aa).

Belongs to the BetVI family.

The chain is Protein PR-L3 from Lupinus luteus (European yellow lupine).